The following is a 95-amino-acid chain: Co-chaperonin GroES (95 aa).

It belongs to the GroES chaperonin family. In terms of assembly, heptamer of 7 subunits arranged in a ring. Interacts with the chaperonin GroEL.

It is found in the cytoplasm. Its function is as follows. Together with the chaperonin GroEL, plays an essential role in assisting protein folding. The GroEL-GroES system forms a nano-cage that allows encapsulation of the non-native substrate proteins and provides a physical environment optimized to promote and accelerate protein folding. GroES binds to the apical surface of the GroEL ring, thereby capping the opening of the GroEL channel. This is Co-chaperonin GroES from Desulfosudis oleivorans (strain DSM 6200 / JCM 39069 / Hxd3) (Desulfococcus oleovorans).